Reading from the N-terminus, the 80-residue chain is Protein Vpu (80 aa).

Residues Met-1 to Leu-6 are Extracellular-facing. The helical transmembrane segment at Gly-7–Ile-27 threads the bilayer. The Cytoplasmic portion of the chain corresponds to Glu-28–Leu-80. Ser-52 and Ser-56 each carry phosphoserine; by host CK2.

The protein belongs to the HIV-1 VPU protein family. Homopentamer. Interacts with host CD4 and BRTC; these interactions induce proteasomal degradation of CD4. Interacts with host BST2; this interaction leads to the degradation of host BST2. Interacts with host FBXW11. Interacts with host AP1M1; this interaction plays a role in the mistrafficking and subsequent degradation of host BST2. Interacts with host RANBP2; this interaction allows Vpu to down-regulate host BLM sumoylation. In terms of processing, phosphorylated by host CK2. This phosphorylation is necessary for interaction with human BTRC and degradation of CD4.

The protein resides in the host membrane. With respect to regulation, ion channel activity is inhibited by hexamethylene amiloride in vitro. Functionally, enhances virion budding by targeting host CD4 and Tetherin/BST2 to proteasome degradation. Degradation of CD4 prevents any unwanted premature interactions between viral Env and its host receptor CD4 in the endoplasmic reticulum. Degradation of antiretroviral protein Tetherin/BST2 is important for virion budding, as BST2 tethers new viral particles to the host cell membrane. Mechanistically, Vpu bridges either CD4 or BST2 to BTRC, a substrate recognition subunit of the Skp1/Cullin/F-box protein E3 ubiquitin ligase, induces their ubiquitination and subsequent proteasomal degradation. The alteration of the E3 ligase specificity by Vpu seems to promote the degradation of host IKBKB, leading to NF-kappa-B down-regulation and subsequent apoptosis. Acts as a viroporin that forms an oligomeric ion channel in membranes. Modulates the host DNA repair mechanisms to promote degradation of nuclear viral cDNA in cells that are already productively infected in order to suppress immune sensing and proviral hyper-integration (superinfection). Manipulates PML-NBs and modulates SUMOylation of host BLM protein thereby enhancing its DNA-end processing activity toward viral unintegrated linear DNA. Also inhibits RAD52-mediated homologous repair of viral cDNA, preventing the generation of dead-end circular forms of single copies of the long terminal repeat and permitting sustained nucleolytic attack. The protein is Protein Vpu of Human immunodeficiency virus type 1 group M subtype H (isolate 90CF056) (HIV-1).